Consider the following 461-residue polypeptide: Bifunctional protein GlmU (461 aa).

The tract at residues 1–229 is pyrophosphorylase; it reads MEKYVVVLAA…FSESLGVNDR (229 aa). UDP-N-acetyl-alpha-D-glucosamine-binding positions include 8–11, lysine 22, glutamine 72, and 77–78; these read LAAG and GT. Aspartate 102 contributes to the Mg(2+) binding site. The UDP-N-acetyl-alpha-D-glucosamine site is built by glycine 139, glutamate 154, asparagine 169, and asparagine 227. A Mg(2+)-binding site is contributed by asparagine 227. A linker region spans residues 230–250; that stretch reads VALAQATKTMQRRINEAHMRD. An N-acetyltransferase region spans residues 251 to 461; sequence GVSFIDPDTA…LPLSKDKDWE (211 aa). Positions 332 and 350 each coordinate UDP-N-acetyl-alpha-D-glucosamine. Residue histidine 362 is the Proton acceptor of the active site. 2 residues coordinate UDP-N-acetyl-alpha-D-glucosamine: tyrosine 365 and asparagine 376. Residues 385–386, alanine 422, and arginine 439 each bind acetyl-CoA; that span reads NY.

In the N-terminal section; belongs to the N-acetylglucosamine-1-phosphate uridyltransferase family. It in the C-terminal section; belongs to the transferase hexapeptide repeat family. In terms of assembly, homotrimer. Mg(2+) is required as a cofactor.

The protein localises to the cytoplasm. It carries out the reaction alpha-D-glucosamine 1-phosphate + acetyl-CoA = N-acetyl-alpha-D-glucosamine 1-phosphate + CoA + H(+). It catalyses the reaction N-acetyl-alpha-D-glucosamine 1-phosphate + UTP + H(+) = UDP-N-acetyl-alpha-D-glucosamine + diphosphate. The protein operates within nucleotide-sugar biosynthesis; UDP-N-acetyl-alpha-D-glucosamine biosynthesis; N-acetyl-alpha-D-glucosamine 1-phosphate from alpha-D-glucosamine 6-phosphate (route II): step 2/2. It functions in the pathway nucleotide-sugar biosynthesis; UDP-N-acetyl-alpha-D-glucosamine biosynthesis; UDP-N-acetyl-alpha-D-glucosamine from N-acetyl-alpha-D-glucosamine 1-phosphate: step 1/1. Its pathway is bacterial outer membrane biogenesis; LPS lipid A biosynthesis. Functionally, catalyzes the last two sequential reactions in the de novo biosynthetic pathway for UDP-N-acetylglucosamine (UDP-GlcNAc). The C-terminal domain catalyzes the transfer of acetyl group from acetyl coenzyme A to glucosamine-1-phosphate (GlcN-1-P) to produce N-acetylglucosamine-1-phosphate (GlcNAc-1-P), which is converted into UDP-GlcNAc by the transfer of uridine 5-monophosphate (from uridine 5-triphosphate), a reaction catalyzed by the N-terminal domain. This is Bifunctional protein GlmU from Lactobacillus helveticus (strain DPC 4571).